The chain runs to 269 residues: Hydroxyethylthiazole kinase (269 aa).

Met-46 provides a ligand contact to substrate. ATP contacts are provided by Arg-122 and Thr-168. Residue Gly-195 coordinates substrate.

It belongs to the Thz kinase family. Requires Mg(2+) as cofactor.

It carries out the reaction 5-(2-hydroxyethyl)-4-methylthiazole + ATP = 4-methyl-5-(2-phosphooxyethyl)-thiazole + ADP + H(+). The protein operates within cofactor biosynthesis; thiamine diphosphate biosynthesis; 4-methyl-5-(2-phosphoethyl)-thiazole from 5-(2-hydroxyethyl)-4-methylthiazole: step 1/1. Its function is as follows. Catalyzes the phosphorylation of the hydroxyl group of 4-methyl-5-beta-hydroxyethylthiazole (THZ). The polypeptide is Hydroxyethylthiazole kinase (Geobacillus thermodenitrificans (strain NG80-2)).